A 306-amino-acid polypeptide reads, in one-letter code: Recombination-associated protein RdgC (306 aa).

This sequence belongs to the RdgC family.

The protein resides in the cytoplasm. It localises to the nucleoid. In terms of biological role, may be involved in recombination. The chain is Recombination-associated protein RdgC from Burkholderia ambifaria (strain MC40-6).